Reading from the N-terminus, the 355-residue chain is DNA-directed RNA polymerase subunit alpha (355 aa).

The segment at 1–248 (MYYNNDVSLC…EQLQPFISSD (248 aa)) is alpha N-terminal domain (alpha-NTD). Residues 267–355 (YDPVLLRKVD…ELAKQHTDED (89 aa)) form an alpha C-terminal domain (alpha-CTD) region.

This sequence belongs to the RNA polymerase alpha chain family. Homodimer. The RNAP catalytic core consists of 2 alpha, 1 beta, 1 beta' and 1 omega subunit. When a sigma factor is associated with the core the holoenzyme is formed, which can initiate transcription.

It carries out the reaction RNA(n) + a ribonucleoside 5'-triphosphate = RNA(n+1) + diphosphate. In terms of biological role, DNA-dependent RNA polymerase catalyzes the transcription of DNA into RNA using the four ribonucleoside triphosphates as substrates. In Wolbachia pipientis wMel, this protein is DNA-directed RNA polymerase subunit alpha.